The chain runs to 306 residues: Porphobilinogen deaminase (306 aa).

Cysteine 244 carries the S-(dipyrrolylmethanemethyl)cysteine modification.

It belongs to the HMBS family. In terms of assembly, monomer. Dipyrromethane is required as a cofactor.

It catalyses the reaction 4 porphobilinogen + H2O = hydroxymethylbilane + 4 NH4(+). Its pathway is porphyrin-containing compound metabolism; protoporphyrin-IX biosynthesis; coproporphyrinogen-III from 5-aminolevulinate: step 2/4. Functionally, tetrapolymerization of the monopyrrole PBG into the hydroxymethylbilane pre-uroporphyrinogen in several discrete steps. The polypeptide is Porphobilinogen deaminase (Streptococcus sanguinis (strain SK36)).